The following is a 197-amino-acid chain: Protein Hikeshi (197 aa).

Residues 18–55 (VAEDKFVFDLPDYENINHVVVFMLGTVPFPEGMGGSVY) are required for F-X-F-G repeats-nucleoporins recognition and nuclear import. Positions 124–134 (QTPVGNAAVSS) are flexible linker region involved in nuclear import of HSP70 proteins.

This sequence belongs to the OPI10 family. Forms an asymmetric homodimer; required for binding and nuclear import of HSP70 proteins. Interacts with ATP-bound HSP70 proteins. Interacts with NUP62 and NUP153 (via F-X-F-G repeats). Interacts with HSPA8.

It localises to the cytoplasm. Its subcellular location is the cytosol. The protein localises to the nucleus. In terms of biological role, acts as a specific nuclear import carrier for HSP70 proteins following heat-shock stress: acts by mediating the nucleoporin-dependent translocation of ATP-bound HSP70 proteins into the nucleus. HSP70 proteins import is required to protect cells from heat shock damages. Does not translocate ADP-bound HSP70 proteins into the nucleus. The chain is Protein Hikeshi from Bos taurus (Bovine).